The chain runs to 198 residues: Putative pseudouridine methyltransferase (198 aa).

The S-adenosyl-L-methionine site is built by Met-132 and Cys-186.

It belongs to the methyltransferase superfamily. TrmY family.

It is found in the cytoplasm. The sequence is that of Putative pseudouridine methyltransferase from Shewanella baltica (strain OS185).